An 81-amino-acid chain; its full sequence is MNVDHEVNLLVGEIRRLGSKGNDGKFSVKFGVLFSDDKCANLFEALVGTLKAAKKRKIITYQGELLLQGVHDNVDIVLLQD.

The protein belongs to the costars family.

The polypeptide is Costars family protein ABRACL (abracl) (Xenopus laevis (African clawed frog)).